The primary structure comprises 425 residues: Glutamate-1-semialdehyde 2,1-aminomutase (425 aa).

Lysine 265 carries the N6-(pyridoxal phosphate)lysine modification.

Belongs to the class-III pyridoxal-phosphate-dependent aminotransferase family. HemL subfamily. In terms of assembly, homodimer. The cofactor is pyridoxal 5'-phosphate.

It localises to the cytoplasm. It catalyses the reaction (S)-4-amino-5-oxopentanoate = 5-aminolevulinate. The protein operates within porphyrin-containing compound metabolism; protoporphyrin-IX biosynthesis; 5-aminolevulinate from L-glutamyl-tRNA(Glu): step 2/2. The chain is Glutamate-1-semialdehyde 2,1-aminomutase from Clostridium perfringens (strain 13 / Type A).